The primary structure comprises 422 residues: Probable FBD-associated F-box protein At1g32375 (422 aa).

One can recognise an F-box domain in the interval 1–53 (MDKLSQLPEALLVRILSLLSAKDVVSTMVLSKRWQFLWMLVPKLIYDDSYQAI). The FBD domain maps to 342-392 (CWNEPSAVPECLLTSLETLEWVKYEGTEEEKEVAAFILRSGSCLKKVTISS).

This is Probable FBD-associated F-box protein At1g32375 from Arabidopsis thaliana (Mouse-ear cress).